An 89-amino-acid chain; its full sequence is Cornifin-B (89 aa).

Residues 1-29 are disordered; it reads MSSQQQKQPCTPPPQLQQQQVKQPCQPPP. 8 consecutive repeat copies span residues 3-14, 18-29, 31-38, 39-46, 47-54, 55-62, 63-70, and 71-78. The 2 X 12 AA approximate repeats stretch occupies residues 3–29; that stretch reads SQQQKQPCTPPPQLQQQQVKQPCQPPP. The 6 X 8 AA approximate tandem repeats stretch occupies residues 31–78; that stretch reads EPCIPKTKEPCHPKVPEPCHPKVPEPCQPKVPEPCHPKVPEPCPSIVT.

It belongs to the cornifin (SPRR) family. Post-translationally, the N-terminus is blocked. As to expression, suprabasal layers of squamous-differentiated tissues such as epidermis, esophagus, tongue and trachea.

It is found in the cytoplasm. Cross-linked envelope protein of keratinocytes. It is a keratinocyte protein that first appears in the cell cytosol, but ultimately becomes cross-linked to membrane proteins by transglutaminase. All that results in the formation of an insoluble envelope beneath the plasma membrane. Can function as both amine donor and acceptor in transglutaminase-mediated cross-linkage. This Homo sapiens (Human) protein is Cornifin-B (SPRR1B).